We begin with the raw amino-acid sequence, 476 residues long: Alkaline phosphatase H (476 aa).

Positions 1–26 (MTPGYPLALSLAVSMAVLGSALPAQA) are cleaved as a signal peptide. A Mg(2+)-binding site is contributed by Asp77. Asp77 contacts Zn(2+). Residue Ser128 is the Phosphoserine intermediate of the active site. Ser128 carries the post-translational modification Phosphoserine. Residues Asp179 and Thr181 each coordinate Mg(2+). A Phosphoserine modification is found at Ser206. Gln346 lines the Mg(2+) pocket. Residues Asp353, His357, Asp395, His396, and His438 each contribute to the Zn(2+) site.

This sequence belongs to the alkaline phosphatase family. Mg(2+) serves as cofactor. Requires Zn(2+) as cofactor.

The protein localises to the secreted. The protein resides in the periplasm. The catalysed reaction is a phosphate monoester + H2O = an alcohol + phosphate. Its function is as follows. Has only phosphomonoesterase activity. The chain is Alkaline phosphatase H (phoA) from Pseudomonas aeruginosa (strain UCBPP-PA14).